The chain runs to 139 residues: Endoribonuclease YbeY (139 aa).

Zn(2+) is bound by residues H107, H111, and D117.

The protein belongs to the endoribonuclease YbeY family. It depends on Zn(2+) as a cofactor.

It localises to the cytoplasm. Single strand-specific metallo-endoribonuclease involved in late-stage 70S ribosome quality control and in maturation of the 3' terminus of the 16S rRNA. This chain is Endoribonuclease YbeY, found in Azobacteroides pseudotrichonymphae genomovar. CFP2.